The chain runs to 357 residues: Snake venom metalloproteinase H4 (357 aa).

An N-terminal signal peptide occupies residues 1-6 (FPYQGS). The propeptide occupies 7-176 (SIMLESGKVN…KKASQLIVST (170 aa)). Positions 180–357 (RYMEIVIVVD…EVIKYFLDSK (178 aa)) constitute a Peptidase M12B domain. His316 is a binding site for Zn(2+). Glu317 is an active-site residue. Zn(2+)-binding residues include His320 and His326. A disulfide bond links Cys333 and Cys339.

Belongs to the venom metalloproteinase (M12B) family. P-I subfamily. Monomer. Zn(2+) is required as a cofactor. Expressed by the venom gland.

It is found in the secreted. In terms of biological role, snake venom metalloproteinase that impairs hemostasis in the envenomed animal. The polypeptide is Snake venom metalloproteinase H4 (Deinagkistrodon acutus (Hundred-pace snake)).